The following is a 404-amino-acid chain: Phosphopentomutase (404 aa).

The Mn(2+) site is built by Asp10, Asp303, His308, Asp344, His345, and His356.

It belongs to the phosphopentomutase family. The cofactor is Mn(2+).

The protein localises to the cytoplasm. It carries out the reaction 2-deoxy-alpha-D-ribose 1-phosphate = 2-deoxy-D-ribose 5-phosphate. The enzyme catalyses alpha-D-ribose 1-phosphate = D-ribose 5-phosphate. It participates in carbohydrate degradation; 2-deoxy-D-ribose 1-phosphate degradation; D-glyceraldehyde 3-phosphate and acetaldehyde from 2-deoxy-alpha-D-ribose 1-phosphate: step 1/2. Functionally, isomerase that catalyzes the conversion of deoxy-ribose 1-phosphate (dRib-1-P) and ribose 1-phosphate (Rib-1-P) to deoxy-ribose 5-phosphate (dRib-5-P) and ribose 5-phosphate (Rib-5-P), respectively. This Shewanella baltica (strain OS185) protein is Phosphopentomutase.